The chain runs to 360 residues: Isocitrate dehydrogenase [NAD] regulatory subunit B, mitochondrial (360 aa).

Residues 1-113 (MLGRLRTVVK…MELRKALDLY (113 aa)) constitute a mitochondrion transit peptide. Ser101, Asn103, Arg107, and Arg140 together coordinate substrate. Residue Asp227 participates in Mg(2+) binding. NADP(+) is bound by residues 284–290 (HHVAADI) and Asn297.

It belongs to the isocitrate and isopropylmalate dehydrogenases family. Heterooligomer of catalytic and regulatory subunits. Mg(2+) serves as cofactor. Mn(2+) is required as a cofactor.

Its subcellular location is the mitochondrion. The catalysed reaction is D-threo-isocitrate + NAD(+) = 2-oxoglutarate + CO2 + NADH. In terms of biological role, performs an essential role in the oxidative function of the citric acid cycle. This Dictyostelium discoideum (Social amoeba) protein is Isocitrate dehydrogenase [NAD] regulatory subunit B, mitochondrial (idhB).